A 505-amino-acid polypeptide reads, in one-letter code: Exodeoxyribonuclease 7 large subunit (505 aa).

The interval 466 to 505 (SGDRDAVIDGEGGPAPAPTAPAPKPRPKPAAPPAGQGDLF) is disordered. Over residues 480 to 497 (APAPTAPAPKPRPKPAAP) the composition is skewed to pro residues.

Belongs to the XseA family. As to quaternary structure, heterooligomer composed of large and small subunits.

The protein resides in the cytoplasm. It catalyses the reaction Exonucleolytic cleavage in either 5'- to 3'- or 3'- to 5'-direction to yield nucleoside 5'-phosphates.. Functionally, bidirectionally degrades single-stranded DNA into large acid-insoluble oligonucleotides, which are then degraded further into small acid-soluble oligonucleotides. The sequence is that of Exodeoxyribonuclease 7 large subunit from Caulobacter vibrioides (strain NA1000 / CB15N) (Caulobacter crescentus).